Reading from the N-terminus, the 256-residue chain is DNA repair protein RecO (256 aa).

This sequence belongs to the RecO family.

Involved in DNA repair and RecF pathway recombination. The sequence is that of DNA repair protein RecO from Streptococcus equi subsp. zooepidemicus (strain MGCS10565).